The sequence spans 744 residues: Receptor-like serine/threonine-protein kinase ALE2 (744 aa).

The first 19 residues, 1-19, serve as a signal peptide directing secretion; it reads MRNFAMLLLLILLLHSLAS. The Extracellular segment spans residues 20-260; sequence FPICFARLFP…SQGIGFRTIA (241 aa). Pro residues predominate over residues 59–68; that stretch reads PAFSPNPSRI. The disordered stretch occupies residues 59–79; sequence PAFSPNPSRIPPLRHKGHHRH. The segment covering 70-79 has biased composition (basic residues); it reads PLRHKGHHRH. N-linked (GlcNAc...) asparagine glycans are attached at residues Asn-87, Asn-186, Asn-204, Asn-243, and Asn-249. Residues 261–281 traverse the membrane as a helical segment; sequence IIALSGFVLILVLVGAISIIV. Residues 282-744 lie on the Cytoplasmic side of the membrane; the sequence is KWKKIGKSSN…HLWSGNGDWL (463 aa). In terms of domain architecture, Protein kinase spans 349-619; that stretch reads FSAKRVLGEG…GEVVQALKLI (271 aa). ATP is bound by residues 355-363 and Lys-377; that span reads LGEGGFGRV. The Proton acceptor role is filled by Asp-470. Disordered regions lie at residues 681–705 and 722–744; these read EDME…PNRS and GSMS…GDWL.

It belongs to the protein kinase superfamily. Ser/Thr protein kinase family. Autophosphorylated and phosphorylated by ACR4.

It is found in the cell membrane. The catalysed reaction is L-seryl-[protein] + ATP = O-phospho-L-seryl-[protein] + ADP + H(+). It catalyses the reaction L-threonyl-[protein] + ATP = O-phospho-L-threonyl-[protein] + ADP + H(+). Functionally, required during the differentiation of the protoderm into shoots epidermis and cuticle. This is Receptor-like serine/threonine-protein kinase ALE2 (ALE2) from Arabidopsis thaliana (Mouse-ear cress).